Here is a 1055-residue protein sequence, read N- to C-terminus: Error-prone DNA polymerase (1055 aa).

It belongs to the DNA polymerase type-C family. DnaE2 subfamily.

Its subcellular location is the cytoplasm. It carries out the reaction DNA(n) + a 2'-deoxyribonucleoside 5'-triphosphate = DNA(n+1) + diphosphate. Functionally, DNA polymerase involved in damage-induced mutagenesis and translesion synthesis (TLS). It is not the major replicative DNA polymerase. This is Error-prone DNA polymerase from Corynebacterium glutamicum (strain ATCC 13032 / DSM 20300 / JCM 1318 / BCRC 11384 / CCUG 27702 / LMG 3730 / NBRC 12168 / NCIMB 10025 / NRRL B-2784 / 534).